The sequence spans 224 residues: Response regulator protein GraR (224 aa).

Residues 2–115 form the Response regulatory domain; sequence QILLVEDDNT…VLIAKLQAIY (114 aa). 4-aspartylphosphate is present on D51. The ompR/PhoB-type DNA-binding region spans 126-224; the sequence is KRTLTWQDAV…KVGKGYMAHE (99 aa). T128, T130, and T149 each carry phosphothreonine.

As to quaternary structure, interacts with GraX. Phosphorylated by GraS. Phosphorylated by Stk1; phosphorylation increases the DNA-binding activity of GraR.

The protein resides in the cytoplasm. Its function is as follows. Member of the two-component regulatory system GraR/GraS involved in resistance against cationic antimicrobial peptides (CAMPs). Upon phosphorylation by GraS, functions as a transcription regulator by direct binding to promoter regions of target genes such as adhesins, exoproteins, transporters, toxins, and proteins involved in cell wall synthesis. Down-regulates the expression of many genes involved in RNA and amino acid synthesis or glycolysis. This chain is Response regulator protein GraR (graR), found in Staphylococcus aureus (strain Mu3 / ATCC 700698).